The chain runs to 312 residues: tRNA dimethylallyltransferase (312 aa).

Position 15–22 (15–22) interacts with ATP; that stretch reads GPTAAGKS. 17–22 contacts substrate; that stretch reads TAAGKS. Positions 40-43 are interaction with substrate tRNA; sequence DSMQ.

The protein belongs to the IPP transferase family. Monomer. It depends on Mg(2+) as a cofactor.

It catalyses the reaction adenosine(37) in tRNA + dimethylallyl diphosphate = N(6)-dimethylallyladenosine(37) in tRNA + diphosphate. In terms of biological role, catalyzes the transfer of a dimethylallyl group onto the adenine at position 37 in tRNAs that read codons beginning with uridine, leading to the formation of N6-(dimethylallyl)adenosine (i(6)A). The protein is tRNA dimethylallyltransferase of Streptomyces griseus subsp. griseus (strain JCM 4626 / CBS 651.72 / NBRC 13350 / KCC S-0626 / ISP 5235).